The sequence spans 120 residues: MRATGSVASRCRRKRILKQAKGFWGDRKGHFRQSRSSVMRAMAFNYMHRKDRKGDFRSLWIARLNVASRINGLSYSRLINGLKCAGIDLNRKMLSEMAIHNPTGFAEVANQAKKALEANL.

It belongs to the bacterial ribosomal protein bL20 family.

In terms of biological role, binds directly to 23S ribosomal RNA and is necessary for the in vitro assembly process of the 50S ribosomal subunit. It is not involved in the protein synthesizing functions of that subunit. This chain is Large ribosomal subunit protein bL20, found in Chlamydia abortus (strain DSM 27085 / S26/3) (Chlamydophila abortus).